Consider the following 86-residue polypeptide: RNA-binding protein Hfq (86 aa).

The Sm domain maps to 9–68 (DPYLNVLRKERIPVSIYLVNGIKLQGQVESFDQFVVLLKNTVSQMVYKHAISTVVPSRPV).

The protein belongs to the Hfq family. In terms of assembly, homohexamer.

Functionally, RNA chaperone that binds small regulatory RNA (sRNAs) and mRNAs to facilitate mRNA translational regulation in response to envelope stress, environmental stress and changes in metabolite concentrations. Also binds with high specificity to tRNAs. This Saccharophagus degradans (strain 2-40 / ATCC 43961 / DSM 17024) protein is RNA-binding protein Hfq.